Here is a 141-residue protein sequence, read N- to C-terminus: Nucleoside diphosphate kinase (141 aa).

Lys11, Phe59, Arg87, Thr93, Arg104, and Asn114 together coordinate ATP. The active-site Pros-phosphohistidine intermediate is His117.

The protein belongs to the NDK family. As to quaternary structure, homotetramer. Mg(2+) is required as a cofactor.

Its subcellular location is the cytoplasm. The catalysed reaction is a 2'-deoxyribonucleoside 5'-diphosphate + ATP = a 2'-deoxyribonucleoside 5'-triphosphate + ADP. It carries out the reaction a ribonucleoside 5'-diphosphate + ATP = a ribonucleoside 5'-triphosphate + ADP. Major role in the synthesis of nucleoside triphosphates other than ATP. The ATP gamma phosphate is transferred to the NDP beta phosphate via a ping-pong mechanism, using a phosphorylated active-site intermediate. The protein is Nucleoside diphosphate kinase of Chromobacterium violaceum (strain ATCC 12472 / DSM 30191 / JCM 1249 / CCUG 213 / NBRC 12614 / NCIMB 9131 / NCTC 9757 / MK).